Here is a 411-residue protein sequence, read N- to C-terminus: Peptidase T (411 aa).

Histidine 79 is a binding site for Zn(2+). Aspartate 81 is a catalytic residue. A Zn(2+)-binding site is contributed by aspartate 142. Glutamate 176 (proton acceptor) is an active-site residue. 3 residues coordinate Zn(2+): glutamate 177, aspartate 199, and histidine 381.

Belongs to the peptidase M20B family. Zn(2+) serves as cofactor.

The protein resides in the cytoplasm. It catalyses the reaction Release of the N-terminal residue from a tripeptide.. Its function is as follows. Cleaves the N-terminal amino acid of tripeptides. This Geobacillus kaustophilus (strain HTA426) protein is Peptidase T.